The primary structure comprises 243 residues: UMP-CMP kinase 1 (243 aa).

An ATP-binding site is contributed by 29–34 (GSGKGT). The interval 49 to 78 (SAGDLLREEAKYDTEQGTMIKNLMNEGKLV) is NMP. A ribonucleoside 5'-phosphate is bound by residues arginine 55, 76 to 78 (KLV), and 103 to 106 (GFPR). Asparagine 110 contacts CMP. The segment at 141-149 (NRNQGRDDD) is LID. Residue arginine 142 coordinates ATP. 2 residues coordinate a ribonucleoside 5'-phosphate: arginine 146 and arginine 157. Arginine 185 serves as a coordination point for ATP.

It belongs to the adenylate kinase family. UMP-CMP kinase subfamily. Monomer. Mg(2+) is required as a cofactor.

It is found in the cytoplasm. The protein localises to the nucleus. It carries out the reaction UMP + ATP = UDP + ADP. The catalysed reaction is CMP + ATP = CDP + ADP. It catalyses the reaction dCMP + ATP = dCDP + ADP. Catalyzes the phosphorylation of pyrimidine nucleoside monophosphates at the expense of ATP. Plays an important role in de novo pyrimidine nucleotide biosynthesis. Has preference for UMP and CMP as phosphate acceptors. The chain is UMP-CMP kinase 1 from Oryza sativa subsp. japonica (Rice).